A 137-amino-acid chain; its full sequence is Large ribosomal subunit protein uL16 (137 aa).

Belongs to the universal ribosomal protein uL16 family. Part of the 50S ribosomal subunit.

In terms of biological role, binds 23S rRNA and is also seen to make contacts with the A and possibly P site tRNAs. The sequence is that of Large ribosomal subunit protein uL16 from Streptococcus suis (strain 98HAH33).